We begin with the raw amino-acid sequence, 101 residues long: Small ribosomal subunit protein uS14 (101 aa).

Positions 1 to 23 (MAKKSSVEKNKRRRKMVAQQAPK) are disordered.

This sequence belongs to the universal ribosomal protein uS14 family. Part of the 30S ribosomal subunit. Contacts proteins S3 and S10.

Binds 16S rRNA, required for the assembly of 30S particles and may also be responsible for determining the conformation of the 16S rRNA at the A site. This chain is Small ribosomal subunit protein uS14, found in Rhodospirillum centenum (strain ATCC 51521 / SW).